A 111-amino-acid polypeptide reads, in one-letter code: Large ribosomal subunit protein eL33x (111 aa).

This sequence belongs to the eukaryotic ribosomal protein eL33 family.

This chain is Large ribosomal subunit protein eL33x (RPL35AD), found in Arabidopsis thaliana (Mouse-ear cress).